A 322-amino-acid polypeptide reads, in one-letter code: MLEVLIIGAGPTGLYAAFLAGLRNLKAAVIESSAEPGGQLTAVYKDKYIYDIPGFPKITAKDYIDGQVLQYERFKSDLPIYYNEEAIDIKKHDDHFIVTTTTKTIETKFVLIAHGGGGFVPQKLKIDEHYDNILYFIKDLNQFKDKKIVVLGGGDSALDWAIDLSEYTKDVTLVHRRDEFRALQSSVDHFREKGTILTPYIVDTVEGNDKLVHTLVLKHAKTHERLNLDADYIVVNYGFVLTKSRLDEWGIEGEKGLIKVDYTMKTSLDGIYAAGNGIDYPGKVKLISTGQGEAATAIQSITTLLYPEKTRKFEHSTALIKE.

FAD-binding residues include threonine 12, glutamate 31, glutamine 39, tyrosine 44, alanine 86, phenylalanine 119, and threonine 317.

Belongs to the ferredoxin--NADP reductase type 2 family. As to quaternary structure, homodimer. FAD serves as cofactor.

The catalysed reaction is 2 reduced [2Fe-2S]-[ferredoxin] + NADP(+) + H(+) = 2 oxidized [2Fe-2S]-[ferredoxin] + NADPH. This is Ferredoxin--NADP reductase from Acholeplasma laidlawii (strain PG-8A).